The chain runs to 125 residues: Large ribosomal subunit protein bL12 (125 aa).

Belongs to the bacterial ribosomal protein bL12 family. In terms of assembly, homodimer. Part of the ribosomal stalk of the 50S ribosomal subunit. Forms a multimeric L10(L12)X complex, where L10 forms an elongated spine to which 2 to 4 L12 dimers bind in a sequential fashion. Binds GTP-bound translation factors.

Functionally, forms part of the ribosomal stalk which helps the ribosome interact with GTP-bound translation factors. Is thus essential for accurate translation. The protein is Large ribosomal subunit protein bL12 of Chelativorans sp. (strain BNC1).